Here is a 298-residue protein sequence, read N- to C-terminus: Deoxyuridine 5'-triphosphate nucleotidohydrolase (298 aa).

A substrate-binding site is contributed by 180–182 (RSG).

It belongs to the dUTPase family. Requires Mg(2+) as cofactor.

The catalysed reaction is dUTP + H2O = dUMP + diphosphate + H(+). Involved in nucleotide metabolism: produces dUMP, the immediate precursor of thymidine nucleotides and decreases the intracellular concentration of dUTP to avoid uracil incorporation into viral DNA. The sequence is that of Deoxyuridine 5'-triphosphate nucleotidohydrolase from Alcelaphine herpesvirus 1 (strain C500) (AlHV-1).